The chain runs to 199 residues: Peptidyl-tRNA hydrolase (199 aa).

Tyr18 contacts tRNA. Residue His23 is the Proton acceptor of the active site. The tRNA site is built by Tyr69, Asn71, and Asn117.

Belongs to the PTH family. As to quaternary structure, monomer.

It is found in the cytoplasm. The enzyme catalyses an N-acyl-L-alpha-aminoacyl-tRNA + H2O = an N-acyl-L-amino acid + a tRNA + H(+). Functionally, hydrolyzes ribosome-free peptidyl-tRNAs (with 1 or more amino acids incorporated), which drop off the ribosome during protein synthesis, or as a result of ribosome stalling. In terms of biological role, catalyzes the release of premature peptidyl moieties from peptidyl-tRNA molecules trapped in stalled 50S ribosomal subunits, and thus maintains levels of free tRNAs and 50S ribosomes. This Prochlorococcus marinus (strain MIT 9515) protein is Peptidyl-tRNA hydrolase.